Here is a 156-residue protein sequence, read N- to C-terminus: Snaclec A6 (156 aa).

Residues 1–23 (MGRSISVSFGLLVVFLSLSGTGA) form the signal peptide. Disulfide bonds link Cys27-Cys38, Cys55-Cys154, and Cys129-Cys146. One can recognise a C-type lectin domain in the interval 34-155 (HEGHCYKVFN…CGKPYRFTCE (122 aa)).

It belongs to the snaclec family. In terms of assembly, heterodimer; disulfide-linked. Expressed by the venom gland.

The protein resides in the secreted. Its function is as follows. Interferes with one step of hemostasis (modulation of platelet aggregation, or coagulation cascade, for example). This Macrovipera lebetinus (Levantine viper) protein is Snaclec A6.